A 508-amino-acid chain; its full sequence is tRNA(Ile2) 2-agmatinylcytidine synthetase TiaS (508 aa).

Residues 367–427 constitute a DNA-binding region (OB); the sequence is ITGGHVLIEL…YQLNIEKINV (61 aa).

Belongs to the TiaS family.

It is found in the cytoplasm. The enzyme catalyses cytidine(34) in tRNA(Ile2) + agmatine + ATP + H2O = 2-agmatinylcytidine(34) in tRNA(Ile2) + AMP + 2 phosphate + 2 H(+). In terms of biological role, ATP-dependent agmatine transferase that catalyzes the formation of 2-agmatinylcytidine (agm2C) at the wobble position (C34) of tRNA(Ile2), converting the codon specificity from AUG to AUA. The protein is tRNA(Ile2) 2-agmatinylcytidine synthetase TiaS of Methanococcus voltae (strain ATCC BAA-1334 / A3).